The following is a 134-amino-acid chain: Probable glycine cleavage system H protein (134 aa).

A Lipoyl-binding domain is found at Thr29–Lys110. An N6-lipoyllysine modification is found at Lys70.

The protein belongs to the GcvH family. In terms of assembly, the glycine cleavage system is composed of four proteins: P, T, L and H. The cofactor is (R)-lipoate.

Its function is as follows. The glycine cleavage system catalyzes the degradation of glycine. The H protein shuttles the methylamine group of glycine from the P protein to the T protein. The chain is Probable glycine cleavage system H protein from Pyrococcus furiosus (strain ATCC 43587 / DSM 3638 / JCM 8422 / Vc1).